The following is a 417-amino-acid chain: Multifunctional CCA protein (417 aa).

2 residues coordinate ATP: G8 and R11. G8 and R11 together coordinate CTP. The Mg(2+) site is built by D21 and D23. 3 residues coordinate ATP: R91, R143, and R146. The CTP site is built by R91, R143, and R146. In terms of domain architecture, HD spans 232 to 333 (TGVHVMMVVD…VRLFERSDAL (102 aa)).

The protein belongs to the tRNA nucleotidyltransferase/poly(A) polymerase family. Bacterial CCA-adding enzyme type 1 subfamily. In terms of assembly, monomer. Can also form homodimers and oligomers. Mg(2+) is required as a cofactor. Requires Ni(2+) as cofactor.

The enzyme catalyses a tRNA precursor + 2 CTP + ATP = a tRNA with a 3' CCA end + 3 diphosphate. It carries out the reaction a tRNA with a 3' CCA end + 2 CTP + ATP = a tRNA with a 3' CCACCA end + 3 diphosphate. Functionally, catalyzes the addition and repair of the essential 3'-terminal CCA sequence in tRNAs without using a nucleic acid template. Adds these three nucleotides in the order of C, C, and A to the tRNA nucleotide-73, using CTP and ATP as substrates and producing inorganic pyrophosphate. tRNA 3'-terminal CCA addition is required both for tRNA processing and repair. Also involved in tRNA surveillance by mediating tandem CCA addition to generate a CCACCA at the 3' terminus of unstable tRNAs. While stable tRNAs receive only 3'-terminal CCA, unstable tRNAs are marked with CCACCA and rapidly degraded. This chain is Multifunctional CCA protein, found in Paraburkholderia phymatum (strain DSM 17167 / CIP 108236 / LMG 21445 / STM815) (Burkholderia phymatum).